The sequence spans 125 residues: Neuropeptide B (125 aa).

Positions 1–24 are cleaved as a signal peptide; the sequence is MARSATLAAAALALCLLLAPPGLA. The disordered stretch occupies residues 54–73; sequence RRSQPYRGAEPPGGAGASPE. The propeptide occupies 56–125; it reads SQPYRGAEPP…SLRAADCLAA (70 aa).

This sequence belongs to the neuropeptide B/W family. As to expression, widely expressed in the central nervous system. High levels are found in substantia nigra, hypothalamus, hippocampus, spinal cord, placenta and fetal brain; lower levels are found in testis, uterus and ovary. Also detected at high levels in colorectal adenocarcinoma.

It is found in the secreted. Its function is as follows. May be involved in the regulation of feeding, neuroendocrine system, memory, learning and in the afferent pain pathway. This chain is Neuropeptide B (NPB), found in Homo sapiens (Human).